The chain runs to 375 residues: Glycogen synthase kinase-3 homolog YGK3 (375 aa).

The Protein kinase domain occupies 41–329 (VREGKRIGHG…ARQLMAHEFF (289 aa)). ATP contacts are provided by residues 47–55 (IGHGSFGTV) and Lys-74. Catalysis depends on Asp-173, which acts as the Proton acceptor. Ser-211 is modified (phosphoserine).

The protein belongs to the protein kinase superfamily. Ser/Thr protein kinase family.

It carries out the reaction L-seryl-[protein] + ATP = O-phospho-L-seryl-[protein] + ADP + H(+). The enzyme catalyses L-threonyl-[protein] + ATP = O-phospho-L-threonyl-[protein] + ADP + H(+). Its function is as follows. Required for heat stress-instigated phosphorylation of BCY1 which is involved in cell wall integrity signaling. Regulates activity of MSN2, a transcription factor that binds to the stress-response element (STRE). Probably promotes formation of a complex between MSN2 and DNA. Regulates the stability of ROG1. In Saccharomyces cerevisiae (strain ATCC 204508 / S288c) (Baker's yeast), this protein is Glycogen synthase kinase-3 homolog YGK3 (YGK3).